We begin with the raw amino-acid sequence, 258 residues long: UPF0328 protein ECU07_0060 (258 aa).

Belongs to the UPF0328 family.

The polypeptide is UPF0328 protein ECU07_0060 (Encephalitozoon cuniculi (strain GB-M1) (Microsporidian parasite)).